The following is a 208-amino-acid chain: Translation initiation factor 2 subunit beta (208 aa).

The TRAM domain occupies 144–202 (GIEEGKEYTVEISEVGSSGEGRASFRGFTIFVPGTKKGETVKVKIKKIKNDVAIAEVVS).

It belongs to the eIF-2-beta/eIF-5 family. In terms of assembly, heterotrimer composed of an alpha, a beta and a gamma chain.

EIF-2 functions in the early steps of protein synthesis by forming a ternary complex with GTP and initiator tRNA. The polypeptide is Translation initiation factor 2 subunit beta (eif2b) (Thermoplasma volcanium (strain ATCC 51530 / DSM 4299 / JCM 9571 / NBRC 15438 / GSS1)).